The sequence spans 161 residues: DNA-directed RNA polymerase 18 kDa subunit (161 aa).

This sequence belongs to the poxviridae DNA-directed RNA polymerase 18 kDa subunit family. The DNA-dependent RNA polymerase used for intermediate and late genes expression consists of eight subunits Rpo30/OPG66, Rpo7/OPG90, Rpo22/OPG103, Rpo147/OPG105, Rpo18/OPG119, Rpo19/OPG131, Rpo132/OPG151 and Rpo35/OPG156. The same holoenzyme, with the addition of the transcription-specificity factor OPG109, is used for early gene expression.

The protein resides in the virion. The catalysed reaction is RNA(n) + a ribonucleoside 5'-triphosphate = RNA(n+1) + diphosphate. Functionally, part of the DNA-dependent RNA polymerase which catalyzes the transcription of viral DNA into RNA using the four ribonucleoside triphosphates as substrates. Responsible for the transcription of early, intermediate and late genes. DNA-dependent RNA polymerase associates with the early transcription factor (ETF), itself composed of OPG118 and OPG133, thereby allowing the early genes transcription. Late transcription, and probably also intermediate transcription, require newly synthesized RNA polymerase. The sequence is that of DNA-directed RNA polymerase 18 kDa subunit (OPG119) from Vaccinia virus (strain Copenhagen) (VACV).